A 152-amino-acid chain; its full sequence is Heavy metal-associated isoprenylated plant protein 20 (152 aa).

Residues 27–90 form the HMA domain; it reads MQTVNIKVKM…RIERTGKKAE (64 aa). Residues cysteine 38 and cysteine 41 each contribute to the Cd(2+) site. Position 149 is a cysteine methyl ester (cysteine 149). Cysteine 149 is lipidated: S-farnesyl cysteine. Positions 150–152 are cleaved as a propeptide — removed in mature form; that stretch reads TVM.

This sequence belongs to the HIPP family. As to quaternary structure, interacts with ZHD11/HB29. In terms of tissue distribution, expressed in roots, shoot apical meristem, leaves and flowers.

It localises to the membrane. Heavy-metal-binding protein. Binds cadmium. May be involved in cadmium transport and play a role in cadmium detoxification. In Arabidopsis thaliana (Mouse-ear cress), this protein is Heavy metal-associated isoprenylated plant protein 20.